The primary structure comprises 310 residues: Small ribosomal subunit biogenesis GTPase RsgA (310 aa).

The region spanning 77-238 (LSKQSHILAA…IIDTPGIKGF (162 aa)) is the CP-type G domain. Residues 126-129 (NKVD) and 180-188 (GHSGVGKST) contribute to the GTP site. Residues Cys-262, Cys-267, His-269, and Cys-275 each coordinate Zn(2+).

Belongs to the TRAFAC class YlqF/YawG GTPase family. RsgA subfamily. As to quaternary structure, monomer. Associates with 30S ribosomal subunit, binds 16S rRNA. Requires Zn(2+) as cofactor.

The protein localises to the cytoplasm. Its function is as follows. One of several proteins that assist in the late maturation steps of the functional core of the 30S ribosomal subunit. Helps release RbfA from mature subunits. May play a role in the assembly of ribosomal proteins into the subunit. Circularly permuted GTPase that catalyzes slow GTP hydrolysis, GTPase activity is stimulated by the 30S ribosomal subunit. This Bacteroides fragilis (strain ATCC 25285 / DSM 2151 / CCUG 4856 / JCM 11019 / LMG 10263 / NCTC 9343 / Onslow / VPI 2553 / EN-2) protein is Small ribosomal subunit biogenesis GTPase RsgA.